The sequence spans 109 residues: Cell division protein ZapA (109 aa).

Residues 21–99 (PEQLDALNQA…IEQALLEQGR (79 aa)) are a coiled coil.

Belongs to the ZapA family. Type 1 subfamily. As to quaternary structure, homodimer. Interacts with FtsZ.

It is found in the cytoplasm. Its function is as follows. Activator of cell division through the inhibition of FtsZ GTPase activity, therefore promoting FtsZ assembly into bundles of protofilaments necessary for the formation of the division Z ring. It is recruited early at mid-cell but it is not essential for cell division. The polypeptide is Cell division protein ZapA (Edwardsiella ictaluri (strain 93-146)).